Reading from the N-terminus, the 490-residue chain is Acetyl-coenzyme A carboxylase carboxyl transferase subunit beta, chloroplastic (490 aa).

Positions 184–203 (LNSSENEGSSRRTRTKGSDL) are disordered. Residues 221 to 490 (LWVQCENCYG…PLNQKSSKIK (270 aa)) form the CoA carboxyltransferase N-terminal domain. The Zn(2+) site is built by Cys225, Cys228, Cys244, and Cys247. A C4-type zinc finger spans residues 225–247 (CENCYGLNYKKFLKSKMNICEQC).

This sequence belongs to the AccD/PCCB family. Acetyl-CoA carboxylase is a heterohexamer composed of biotin carboxyl carrier protein, biotin carboxylase and 2 subunits each of ACCase subunit alpha and ACCase plastid-coded subunit beta (accD). Zn(2+) serves as cofactor.

Its subcellular location is the plastid. The protein resides in the chloroplast stroma. The catalysed reaction is N(6)-carboxybiotinyl-L-lysyl-[protein] + acetyl-CoA = N(6)-biotinyl-L-lysyl-[protein] + malonyl-CoA. Its pathway is lipid metabolism; malonyl-CoA biosynthesis; malonyl-CoA from acetyl-CoA: step 1/1. Component of the acetyl coenzyme A carboxylase (ACC) complex. Biotin carboxylase (BC) catalyzes the carboxylation of biotin on its carrier protein (BCCP) and then the CO(2) group is transferred by the transcarboxylase to acetyl-CoA to form malonyl-CoA. The polypeptide is Acetyl-coenzyme A carboxylase carboxyl transferase subunit beta, chloroplastic (Solanum bulbocastanum (Wild potato)).